A 343-amino-acid polypeptide reads, in one-letter code: N-acetyl-gamma-glutamyl-phosphate reductase (343 aa).

C149 is an active-site residue.

This sequence belongs to the NAGSA dehydrogenase family. Type 1 subfamily.

The protein resides in the cytoplasm. The enzyme catalyses N-acetyl-L-glutamate 5-semialdehyde + phosphate + NADP(+) = N-acetyl-L-glutamyl 5-phosphate + NADPH + H(+). It participates in amino-acid biosynthesis; L-arginine biosynthesis; N(2)-acetyl-L-ornithine from L-glutamate: step 3/4. Functionally, catalyzes the NADPH-dependent reduction of N-acetyl-5-glutamyl phosphate to yield N-acetyl-L-glutamate 5-semialdehyde. In Alkalilimnicola ehrlichii (strain ATCC BAA-1101 / DSM 17681 / MLHE-1), this protein is N-acetyl-gamma-glutamyl-phosphate reductase.